A 213-amino-acid polypeptide reads, in one-letter code: Protein brother (213 aa).

Residues 189–213 (HTPQTPPEDHHHRGGPGLPRGPMGW) are disordered. Residues 203–213 (GPGLPRGPMGW) are compositionally biased toward gly residues.

It belongs to the CBF-beta family.

Its subcellular location is the nucleus. Regulates the DNA-binding properties of Runt. This is Protein brother (Bro) from Drosophila melanogaster (Fruit fly).